The following is a 309-amino-acid chain: Protein FdhE homolog (309 aa).

The protein belongs to the FdhE family.

Its subcellular location is the cytoplasm. In terms of biological role, necessary for formate dehydrogenase activity. The protein is Protein FdhE homolog of Citrobacter koseri (strain ATCC BAA-895 / CDC 4225-83 / SGSC4696).